A 571-amino-acid chain; its full sequence is uncharacterized protein (571 aa).

Transmembrane regions (helical) follow at residues 10-29, 36-55, 65-87, 96-118, and 166-188; these read VRLH…HFIG, VSLG…GLLF, WAFF…FASL, ALAV…LFRF, and ATTY…PRLL. The RCK C-terminal domain maps to 294 to 378; sequence TEVDDQELLS…IATAARNLGF (85 aa). Helical transmembrane passes span 388–406, 411–433, 446–465, 480–502, 509–531, and 546–568; these read LVYL…LLQV, VPLG…WLYS, LRLL…GLAA, LFAK…GLLL, LPPV…LNAL, and VPFA…CAVA.

This sequence belongs to the AAE transporter (TC 2.A.81) family.

The protein resides in the cell membrane. This is an uncharacterized protein from Bordetella parapertussis (strain 12822 / ATCC BAA-587 / NCTC 13253).